The sequence spans 232 residues: Triosephosphate isomerase (232 aa).

6–8 (NFK) lines the substrate pocket. His90 functions as the Electrophile in the catalytic mechanism. The active-site Proton acceptor is the Glu159. Gly165 and Ser195 together coordinate substrate.

This sequence belongs to the triosephosphate isomerase family. As to quaternary structure, homodimer.

The protein localises to the cytoplasm. The enzyme catalyses D-glyceraldehyde 3-phosphate = dihydroxyacetone phosphate. It functions in the pathway carbohydrate biosynthesis; gluconeogenesis. Its pathway is carbohydrate degradation; glycolysis; D-glyceraldehyde 3-phosphate from glycerone phosphate: step 1/1. Functionally, involved in the gluconeogenesis. Catalyzes stereospecifically the conversion of dihydroxyacetone phosphate (DHAP) to D-glyceraldehyde-3-phosphate (G3P). The sequence is that of Triosephosphate isomerase from Wolinella succinogenes (strain ATCC 29543 / DSM 1740 / CCUG 13145 / JCM 31913 / LMG 7466 / NCTC 11488 / FDC 602W) (Vibrio succinogenes).